A 232-amino-acid polypeptide reads, in one-letter code: Phosphatidylserine decarboxylase proenzyme (232 aa).

The Schiff-base intermediate with substrate; via pyruvic acid role is filled by serine 190. Serine 190 bears the Pyruvic acid (Ser); by autocatalysis mark.

It belongs to the phosphatidylserine decarboxylase family. PSD-A subfamily. In terms of assembly, heterodimer of a large membrane-associated beta subunit and a small pyruvoyl-containing alpha subunit. The cofactor is pyruvate. In terms of processing, is synthesized initially as an inactive proenzyme. Formation of the active enzyme involves a self-maturation process in which the active site pyruvoyl group is generated from an internal serine residue via an autocatalytic post-translational modification. Two non-identical subunits are generated from the proenzyme in this reaction, and the pyruvate is formed at the N-terminus of the alpha chain, which is derived from the carboxyl end of the proenzyme. The post-translation cleavage follows an unusual pathway, termed non-hydrolytic serinolysis, in which the side chain hydroxyl group of the serine supplies its oxygen atom to form the C-terminus of the beta chain, while the remainder of the serine residue undergoes an oxidative deamination to produce ammonia and the pyruvoyl prosthetic group on the alpha chain.

The protein localises to the cell membrane. The catalysed reaction is a 1,2-diacyl-sn-glycero-3-phospho-L-serine + H(+) = a 1,2-diacyl-sn-glycero-3-phosphoethanolamine + CO2. Its pathway is phospholipid metabolism; phosphatidylethanolamine biosynthesis; phosphatidylethanolamine from CDP-diacylglycerol: step 2/2. Catalyzes the formation of phosphatidylethanolamine (PtdEtn) from phosphatidylserine (PtdSer). Important for establishment of root nodule symbiosis with the host plant. The sequence is that of Phosphatidylserine decarboxylase proenzyme from Rhizobium meliloti (strain 1021) (Ensifer meliloti).